Reading from the N-terminus, the 953-residue chain is Glycine dehydrogenase (decarboxylating) (953 aa).

An N6-(pyridoxal phosphate)lysine modification is found at Lys-705.

Belongs to the GcvP family. As to quaternary structure, the glycine cleavage system is composed of four proteins: P, T, L and H. Pyridoxal 5'-phosphate is required as a cofactor.

It carries out the reaction N(6)-[(R)-lipoyl]-L-lysyl-[glycine-cleavage complex H protein] + glycine + H(+) = N(6)-[(R)-S(8)-aminomethyldihydrolipoyl]-L-lysyl-[glycine-cleavage complex H protein] + CO2. Its function is as follows. The glycine cleavage system catalyzes the degradation of glycine. The P protein binds the alpha-amino group of glycine through its pyridoxal phosphate cofactor; CO(2) is released and the remaining methylamine moiety is then transferred to the lipoamide cofactor of the H protein. The sequence is that of Glycine dehydrogenase (decarboxylating) from Sodalis glossinidius (strain morsitans).